The following is a 400-amino-acid chain: Queuine tRNA-ribosyltransferase (400 aa).

Aspartate 93 (proton acceptor) is an active-site residue. Substrate-binding positions include 93 to 97, aspartate 147, glutamine 190, and glycine 217; that span reads DSGGF. Residues 248 to 254 form an RNA binding region; that stretch reads GVGSPED. Aspartate 267 functions as the Nucleophile in the catalytic mechanism. Residues 272–276 are RNA binding; important for wobble base 34 recognition; sequence TRIAR. Zn(2+)-binding residues include cysteine 305, cysteine 307, cysteine 310, and histidine 336. Residues 375–400 are disordered; it reads RRERARAAGGAGHAPGPAEPLLPENR. Residues 388-400 show a composition bias toward low complexity; that stretch reads APGPAEPLLPENR.

The protein belongs to the queuine tRNA-ribosyltransferase family. As to quaternary structure, homodimer. Within each dimer, one monomer is responsible for RNA recognition and catalysis, while the other monomer binds to the replacement base PreQ1. Zn(2+) is required as a cofactor.

The enzyme catalyses 7-aminomethyl-7-carbaguanine + guanosine(34) in tRNA = 7-aminomethyl-7-carbaguanosine(34) in tRNA + guanine. Its pathway is tRNA modification; tRNA-queuosine biosynthesis. In terms of biological role, catalyzes the base-exchange of a guanine (G) residue with the queuine precursor 7-aminomethyl-7-deazaguanine (PreQ1) at position 34 (anticodon wobble position) in tRNAs with GU(N) anticodons (tRNA-Asp, -Asn, -His and -Tyr). Catalysis occurs through a double-displacement mechanism. The nucleophile active site attacks the C1' of nucleotide 34 to detach the guanine base from the RNA, forming a covalent enzyme-RNA intermediate. The proton acceptor active site deprotonates the incoming PreQ1, allowing a nucleophilic attack on the C1' of the ribose to form the product. After dissociation, two additional enzymatic reactions on the tRNA convert PreQ1 to queuine (Q), resulting in the hypermodified nucleoside queuosine (7-(((4,5-cis-dihydroxy-2-cyclopenten-1-yl)amino)methyl)-7-deazaguanosine). This chain is Queuine tRNA-ribosyltransferase, found in Symbiobacterium thermophilum (strain DSM 24528 / JCM 14929 / IAM 14863 / T).